The following is a 251-amino-acid chain: Methionine aminopeptidase (251 aa).

Histidine 76 lines the substrate pocket. The a divalent metal cation site is built by aspartate 93, aspartate 104, and histidine 168. Residue histidine 175 coordinates substrate. 2 residues coordinate a divalent metal cation: glutamate 202 and glutamate 233.

It belongs to the peptidase M24A family. Methionine aminopeptidase type 1 subfamily. In terms of assembly, monomer. Co(2+) serves as cofactor. Zn(2+) is required as a cofactor. Requires Mn(2+) as cofactor. The cofactor is Fe(2+).

It catalyses the reaction Release of N-terminal amino acids, preferentially methionine, from peptides and arylamides.. Removes the N-terminal methionine from nascent proteins. The N-terminal methionine is often cleaved when the second residue in the primary sequence is small and uncharged (Met-Ala-, Cys, Gly, Pro, Ser, Thr, or Val). Requires deformylation of the N(alpha)-formylated initiator methionine before it can be hydrolyzed. This is Methionine aminopeptidase from Staphylococcus epidermidis (strain ATCC 12228 / FDA PCI 1200).